The primary structure comprises 308 residues: MKYLLSYTPEVREALDRNRPVVALESTIISHGMPYPENLRTAREVEEIVRSQGAVPATIAVIGGRCKVGLTDEELELLATSPEAVKVSLRDLPVVLARKSLGATTVATTATIAAAAGIEVFVTGGIGGVHRKSPGDPAQMWDVSADLTVLGRTDITVVCAGAKSVLDIGATLEVLETLGVTVLGYRTDRFPGFYTRDTGFGVDARVDTPEEAAAVIHARQQTMLPGGVLVVNPVPEEHAMDPDEVERHIADALKAMAAEGVTGKAVTPYLLARLKEVTSGRALQTNIALVKHNALVGAQIAVALKAGK.

The active-site Proton donor is the E25. Substrate contacts are provided by K86 and V106. Position 142 (D142) interacts with Mn(2+). 144–146 (SAD) is a substrate binding site. K163 (nucleophile) is an active-site residue.

This sequence belongs to the pseudouridine-5'-phosphate glycosidase family. As to quaternary structure, homotrimer. Requires Mn(2+) as cofactor.

It catalyses the reaction D-ribose 5-phosphate + uracil = psi-UMP + H2O. Catalyzes the reversible cleavage of pseudouridine 5'-phosphate (PsiMP) to ribose 5-phosphate and uracil. Functions biologically in the cleavage direction, as part of a pseudouridine degradation pathway. The chain is Pseudouridine-5'-phosphate glycosidase from Symbiobacterium thermophilum (strain DSM 24528 / JCM 14929 / IAM 14863 / T).